The following is a 161-amino-acid chain: Chorion class B protein L12 (161 aa).

The first 21 residues, Met-1 to Ser-21, serve as a signal peptide directing secretion. The tract at residues Ile-22 to Phe-52 is left arm. 3 tandem repeats follow at residues Gly-30–Leu-34, Gly-35–Leu-39, and Gly-40–Leu-44. The segment at Gly-30–Leu-44 is 3 X 5 AA tandem repeats of G-Y-G-G-L. The tract at residues Ser-53–Glu-121 is central domain. The segment at Gly-122–Tyr-161 is right arm (Gly-rich tandem repeats).

Belongs to the chorion protein family.

Functionally, this protein is one of many from the eggshell of the silk moth. The chain is Chorion class B protein L12 from Bombyx mori (Silk moth).